The primary structure comprises 253 residues: Transmembrane protein 51 (253 aa).

2 helical membrane passes run 17 to 37 (IGLG…VPGF) and 65 to 85 (VAYV…CLSI). 2 disordered regions span residues 93 to 133 (QGED…YVPS) and 164 to 253 (LTGL…RPPD). Residues 113-124 (EDSQEEEEEDEE) are compositionally biased toward acidic residues. Residue Ser-115 is modified to Phosphoserine. Residues 164–176 (LTGLDETTPTSTR) are compositionally biased toward polar residues. A phosphoserine mark is found at Ser-182 and Ser-192. The segment covering 194 to 205 (LAKRLKPLKVRR) has biased composition (basic residues). Basic and acidic residues predominate over residues 206 to 217 (IKSEKLHLKDFR). Over residues 224-238 (NVPPPSIEPLTPPPQ) the composition is skewed to pro residues. A compositionally biased stretch (basic and acidic residues) spans 242–253 (VQEKAPDTRPPD).

It is found in the membrane. This chain is Transmembrane protein 51 (TMEM51), found in Homo sapiens (Human).